A 658-amino-acid polypeptide reads, in one-letter code: Outer dynein arm-docking complex subunit 1 (658 aa).

Coiled-coil stretches lie at residues 11-156, 186-234, and 303-380; these read KEVH…RYLN, REEA…KNDE, and NFIN…TDIQ. Disordered stretches follow at residues 496–552 and 574–658; these read DEEE…SVSH and GAPV…RGYN. Phosphoserine is present on residues S500, S506, S507, and S509. Low complexity-rich tracts occupy residues 506–519, 574–583, 592–604, and 621–639; these read SSPSLTLSSPQISL, GAPVSSRSSQ, TSSSSYLGSTGYL, and SMGSELSRGLSSSSGHASS.

It belongs to the ODA1/DCC2 family. As to quaternary structure, component of the outer dynein arm-docking complex along with ODAD2, ODAD3, ODAD4 and CLXN. Interacts with ODAD3. Interacts with ODAD4; this interaction may facilitate the recruitment and/or attachment of outer dynein arm docking complex proteins including ODAD1, ODAD3, and ODAD4 to ciliary axonemes. Interacts with DNAH9. Interacts with MNS1. Interacts with PIERCE1 and PIERCE2; the interactions link the outer dynein arms docking complex (ODA-DC) to the internal microtubule inner proteins (MIP) in cilium axoneme. Expressed in motile ciliated tissues.

The protein resides in the cytoplasm. It localises to the cytoskeleton. The protein localises to the cilium axoneme. In terms of biological role, component of the outer dynein arm-docking complex that mediates outer dynein arms (ODA) binding onto the doublet microtubule. Involved in mediating assembly of both ODAs and their axonemal docking complex onto ciliary microtubules. The protein is Outer dynein arm-docking complex subunit 1 (Odad1) of Mus musculus (Mouse).